The chain runs to 507 residues: 2,3-bisphosphoglycerate-independent phosphoglycerate mutase (507 aa).

D11 and S61 together coordinate Mn(2+). S61 acts as the Phosphoserine intermediate in catalysis. Substrate is bound by residues H122, 150–151 (RD), R182, R188, 257–260 (RPDR), and K332. Mn(2+) is bound by residues D397, H401, D438, H439, and H456.

Belongs to the BPG-independent phosphoglycerate mutase family. In terms of assembly, monomer. It depends on Mn(2+) as a cofactor.

It carries out the reaction (2R)-2-phosphoglycerate = (2R)-3-phosphoglycerate. The protein operates within carbohydrate degradation; glycolysis; pyruvate from D-glyceraldehyde 3-phosphate: step 3/5. Catalyzes the interconversion of 2-phosphoglycerate and 3-phosphoglycerate. This is 2,3-bisphosphoglycerate-independent phosphoglycerate mutase from Mycoplasma genitalium (strain ATCC 33530 / DSM 19775 / NCTC 10195 / G37) (Mycoplasmoides genitalium).